Consider the following 150-residue polypeptide: MFNGRTQDYDDTVITNNGFWSDIYVEEFQKQRAIPLQIPVEMVKAALVAAIQGVDLDLADVAESYRKSAVNSVTEISSPLINDENYAETLYKKAVFARAKAELLPEFNTLSGREIHQNRDYVTEQKSLLAEATHAIRTLKGKKRGSVWLL.

It to phage P2 protein L.

This chain is Probable head completion/stabilization protein, found in Haemophilus phage HP1 (strain HP1c1) (Bacteriophage HP1).